The sequence spans 164 residues: MQKQHQRQHKVELVANLKSQFADAKALLICDYKGLSVRKLEALRNKARNQGIKVQVIKNTLAHIAMKETGYSDLDLKETNVFLWGDDQIALSKLVFDFQKEHKDHFVLKAGLFDKESVSVAHVEAVSKLPSKEELMGMLLSVWTAPARYFVTGLDNLRKAKEEN.

The protein belongs to the universal ribosomal protein uL10 family. Part of the ribosomal stalk of the 50S ribosomal subunit. The N-terminus interacts with L11 and the large rRNA to form the base of the stalk. The C-terminus forms an elongated spine to which L12 dimers bind in a sequential fashion forming a multimeric L10(L12)X complex.

Its function is as follows. Forms part of the ribosomal stalk, playing a central role in the interaction of the ribosome with GTP-bound translation factors. The sequence is that of Large ribosomal subunit protein uL10 from Helicobacter pylori (strain HPAG1).